The sequence spans 203 residues: MSDSEATTSTDRSESNSTATIHNPEESRLKALLEPAVLASRLYLEDVSIHVAGSHRTVHVVVDLPQEETGGVSLDAIADVSRGLSDILDNDPHDDGRPYDLEVSSPGVSRPLTEPRHWHRARGRMVRVNVIQGDNLLGRIASVGDDAVTLIPEHEVKKGMKPKQGEPITIPFDRIRQGKVEIEFSHLHEAALEDEHNGPSEEA.

The segment covering 1–21 (MSDSEATTSTDRSESNSTATI) has biased composition (polar residues). Residues 1–23 (MSDSEATTSTDRSESNSTATIHN) form a disordered region.

This sequence belongs to the RimP family.

It is found in the cytoplasm. In terms of biological role, required for maturation of 30S ribosomal subunits. The sequence is that of Ribosome maturation factor RimP from Paenarthrobacter aurescens (strain TC1).